Reading from the N-terminus, the 225-residue chain is Insulin-induced gene 2 protein (225 aa).

Topologically, residues 1–28 (MAEGETKSPGPKKCGPYISSVTSQSVNL) are cytoplasmic. The helical transmembrane segment at 29 to 51 (MIRGVVLFFIGVFLALVLNLLQI) threads the bilayer. Residues 52–70 (QRNVTLFPPDVIASIFSSA) are Lumenal-facing. Residues 71-88 (WWVPPCCGTASAVIGLLY) form a helical membrane-spanning segment. Residues 89–103 (PCIDRHLGEPHKFKR) lie on the Cytoplasmic side of the membrane. The chain crosses the membrane as a helical span at residues 104–126 (EWSSVMRCVAVFVGINHASAKVD). Residues 127 to 129 (FDN) lie on the Lumenal side of the membrane. The chain crosses the membrane as a helical span at residues 130–148 (NIQLSLTLAALSIGLWWTF). Over 149-153 (DRSRS) the chain is Cytoplasmic. Serine 151 bears the Phosphoserine mark. A helical membrane pass occupies residues 154-175 (GFGLGVGIAFLATVVTQLLVYN). Residues 176 to 189 (GVYQYTSPDFLYVR) lie on the Lumenal side of the membrane. The helical transmembrane segment at 190 to 207 (SWLPCIFFAGGITMGNIG) threads the bilayer. Residues 208-225 (RQLAMYECKVIAEKSHQE) are Cytoplasmic-facing. A Cysteine sulfenic acid (-SOH); alternate modification is found at cysteine 215. Cysteine 215 participates in a covalent cross-link: Glycyl cysteine thioester (Cys-Gly) (interchain with G-Cter in ubiquitin); alternate. The KxHxx signature appears at 219–225 (AEKSHQE).

Belongs to the INSIG family. In terms of assembly, interacts with SCAP; interaction is direct and only takes place in the presence of sterols; it prevents interaction between SCAP and the coat protein complex II (COPII). Associates with the SCAP-SREBP complex (composed of SCAP and SREBF1/SREBP1 or SREBF2/SREBP2); association is mediated via its interaction with SCAP and only takes place in the presence of sterols. Interacts with RNF139. Interacts with RNF145. In terms of processing, phosphorylation at Ser-151 by PCK1 reduces binding to oxysterol, disrupting the interaction between INSIG2 and SCAP, thereby promoting nuclear translocation of SREBP proteins (SREBF1/SREBP1 or SREBF2/SREBP2) and subsequent transcription of downstream lipogenesis-related genes. Post-translationally, polyubiquitinated by AMFR/gp78 at Cys-215 in some tissues such as adipose tissues, undifferentiated myoblasts and liver, leading to its degradation. In differentiated myotubes, Cys-215 oxidation prevents ubiquitination at the same site, resulting in protein stabilization. Oxidized at Cys-215 in differentiated myotubes, preventing ubiquitination at the same site, and resulting in protein stabilization.

The protein resides in the endoplasmic reticulum membrane. Its function is as follows. Oxysterol-binding protein that mediates feedback control of cholesterol synthesis by controlling both endoplasmic reticulum to Golgi transport of SCAP and degradation of HMGCR. Acts as a negative regulator of cholesterol biosynthesis by mediating the retention of the SCAP-SREBP complex in the endoplasmic reticulum, thereby blocking the processing of sterol regulatory element-binding proteins (SREBPs) SREBF1/SREBP1 and SREBF2/SREBP2. Binds oxysterol, including 22-hydroxycholesterol, 24-hydroxycholesterol, 25-hydroxycholesterol and 27-hydroxycholesterol, regulating interaction with SCAP and retention of the SCAP-SREBP complex in the endoplasmic reticulum. In presence of oxysterol, interacts with SCAP, retaining the SCAP-SREBP complex in the endoplasmic reticulum, thereby preventing SCAP from escorting SREBF1/SREBP1 and SREBF2/SREBP2 to the Golgi. Sterol deprivation or phosphorylation by PCK1 reduce oxysterol-binding, disrupting the interaction between INSIG2 and SCAP, thereby promoting Golgi transport of the SCAP-SREBP complex, followed by processing and nuclear translocation of SREBF1/SREBP1 and SREBF2/SREBP2. Also regulates cholesterol synthesis by regulating degradation of HMGCR: initiates the sterol-mediated ubiquitin-mediated endoplasmic reticulum-associated degradation (ERAD) of HMGCR via recruitment of the reductase to the ubiquitin ligase RNF139. This is Insulin-induced gene 2 protein from Pongo abelii (Sumatran orangutan).